Reading from the N-terminus, the 276-residue chain is Large ribosomal subunit protein uL2 (276 aa).

A disordered region spans residues 208 to 276; sequence KAGRNRHRGI…KLIISRRKGK (69 aa). The span at 230–240 shows a compositional bias: basic and acidic residues; that stretch reads DHPHGGGEGKK. Positions 255–276 are enriched in basic residues; it reads KGAKTRRKKASDKLIISRRKGK.

It belongs to the universal ribosomal protein uL2 family. Part of the 50S ribosomal subunit. Forms a bridge to the 30S subunit in the 70S ribosome.

One of the primary rRNA binding proteins. Required for association of the 30S and 50S subunits to form the 70S ribosome, for tRNA binding and peptide bond formation. It has been suggested to have peptidyltransferase activity; this is somewhat controversial. Makes several contacts with the 16S rRNA in the 70S ribosome. The protein is Large ribosomal subunit protein uL2 of Campylobacter lari (strain RM2100 / D67 / ATCC BAA-1060).